A 344-amino-acid polypeptide reads, in one-letter code: 4-dimethylallyltryptophan N-methyltransferase easF (344 aa).

It belongs to the methyltransferase superfamily. Homodimer.

It catalyses the reaction 4-(3-methylbut-2-enyl)-L-tryptophan + S-adenosyl-L-methionine = 4-(3-methylbut-2-enyl)-L-abrine + S-adenosyl-L-homocysteine + H(+). Its pathway is alkaloid biosynthesis; ergot alkaloid biosynthesis. 4-dimethylallyltryptophan N-methyltransferase; part of the gene cluster that mediates the biosynthesis of fungal ergot alkaloid. DmaW catalyzes the first step of ergot alkaloid biosynthesis by condensing dimethylallyl diphosphate (DMAP) and tryptophan to form 4-dimethylallyl-L-tryptophan. The second step is catalyzed by the methyltransferase easF that methylates 4-dimethylallyl-L-tryptophan in the presence of S-adenosyl-L-methionine, resulting in the formation of 4-dimethylallyl-L-abrine. The catalase easC and the FAD-dependent oxidoreductase easE then transform 4-dimethylallyl-L-abrine to chanoclavine-I which is further oxidized by easD in the presence of NAD(+), resulting in the formation of chanoclavine-I aldehyde. Agroclavine dehydrogenase easG then mediates the conversion of chanoclavine-I aldehyde to agroclavine via a non-enzymatic adduct reaction: the substrate is an iminium intermediate that is formed spontaneously from chanoclavine-I aldehyde in the presence of glutathione. The presence of easA is not required to complete this reaction. Further conversion of agroclavine to paspalic acid is a two-step process involving oxidation of agroclavine to elymoclavine and of elymoclavine to paspalic acid, the second step being performed by the elymoclavine oxidase cloA. Paspalic acid is then further converted to D-lysergic acid. Ergopeptines are assembled from D-lysergic acid and three different amino acids by the D-lysergyl-peptide-synthetases composed each of a monomudular and a trimodular nonribosomal peptide synthetase subunit. LpsB and lpsC encode the monomodular subunits responsible for D-lysergic acid activation and incorporation into the ergopeptine backbone. LpsA1 and A2 subunits encode the trimodular nonribosomal peptide synthetase assembling the tripeptide portion of ergopeptines. LpsA1 is responsible for formation of the major ergopeptine, ergotamine, and lpsA2 for alpha-ergocryptine, the minor ergopeptine of the total alkaloid mixture elaborated by C.purpurea. D-lysergyl-tripeptides are assembled by the nonribosomal peptide synthetases and released as N-(D-lysergyl-aminoacyl)-lactams. Cyclolization of the D-lysergyl-tripeptides is performed by the Fe(2+)/2-ketoglutarate-dependent dioxygenase easH which introduces a hydroxyl group into N-(D-lysergyl-aminoacyl)-lactam at alpha-C of the aminoacyl residue followed by spontaneous condensation with the terminal lactam carbonyl group. The polypeptide is 4-dimethylallyltryptophan N-methyltransferase easF (Claviceps purpurea (Ergot fungus)).